We begin with the raw amino-acid sequence, 90 residues long: Neurotoxin LmNaTx19 (90 aa).

The first 19 residues, 1–19 (MNHLILIVAMCLMVIGVQC), serve as a signal peptide directing secretion. In terms of domain architecture, LCN-type CS-alpha/beta spans 21–80 (KDGYLYDDVDCKFSCWDNEYCRKLCKSKKAVGGYCWRWRFSCYCTGLPDNEKTEGTYKCG). 4 disulfide bridges follow: Cys-31/Cys-79, Cys-35/Cys-55, Cys-41/Cys-62, and Cys-45/Cys-64.

This sequence belongs to the long (4 C-C) scorpion toxin superfamily. Sodium channel inhibitor family. Alpha subfamily. In terms of tissue distribution, expressed by the venom gland.

The protein localises to the secreted. In terms of biological role, binds voltage-independently at site-3 of voltage-gated sodium channels (Nav) and inhibits the inactivation of the activated channels, thereby blocking neuronal transmission. The protein is Neurotoxin LmNaTx19 of Lychas mucronatus (Chinese swimming scorpion).